We begin with the raw amino-acid sequence, 411 residues long: Imidazolonepropionase (411 aa).

His75 and His77 together coordinate Fe(3+). Zn(2+)-binding residues include His75 and His77. Positions 84, 147, and 180 each coordinate 4-imidazolone-5-propanoate. Tyr147 is an N-formimidoyl-L-glutamate binding site. Position 245 (His245) interacts with Fe(3+). His245 is a Zn(2+) binding site. Gln248 contributes to the 4-imidazolone-5-propanoate binding site. Asp320 contributes to the Fe(3+) binding site. Zn(2+) is bound at residue Asp320. N-formimidoyl-L-glutamate contacts are provided by Asn322 and Gly324. Thr325 contacts 4-imidazolone-5-propanoate.

It belongs to the metallo-dependent hydrolases superfamily. HutI family. Zn(2+) is required as a cofactor. Fe(3+) serves as cofactor.

Its subcellular location is the cytoplasm. The catalysed reaction is 4-imidazolone-5-propanoate + H2O = N-formimidoyl-L-glutamate. It participates in amino-acid degradation; L-histidine degradation into L-glutamate; N-formimidoyl-L-glutamate from L-histidine: step 3/3. Catalyzes the hydrolytic cleavage of the carbon-nitrogen bond in imidazolone-5-propanoate to yield N-formimidoyl-L-glutamate. It is the third step in the universal histidine degradation pathway. This Photobacterium profundum (strain SS9) protein is Imidazolonepropionase.